We begin with the raw amino-acid sequence, 574 residues long: Pentatricopeptide repeat-containing protein At5g25630 (574 aa).

Over residues 1–21 the composition is skewed to basic and acidic residues; it reads MEDVNQEKKKVPPMSEPERST. Residues 1 to 25 form a disordered region; that stretch reads MEDVNQEKKKVPPMSEPERSTPIKT. 12 PPR repeats span residues 44–78, 79–113, 114–148, 149–183, 187–221, 222–258, 259–293, 294–328, 329–363, 364–394, 398–432, and 433–467; these read TVRS…GHRP, SLIS…GTKL, DSIF…GLNP, TTST…GNVD, NIRT…GVRP, DTVT…KAKP, NGRT…RVEA, NLVV…NVKA, DVIT…GVKP, DAHA…LIVE, NVVI…GVSP, and NIKT…GVKP.

This sequence belongs to the PPR family. P subfamily.

In Arabidopsis thaliana (Mouse-ear cress), this protein is Pentatricopeptide repeat-containing protein At5g25630.